Consider the following 766-residue polypeptide: Ubiquitin carboxyl-terminal hydrolase creB (766 aa).

A disordered region spans residues 1–32; sequence MGSFLKSFRKDVGSAAPSVGAPPAKKEPQPLP. Low complexity predominate over residues 13–23; that stretch reads GSAAPSVGAPP. The USP domain occupies 55 to 466; the sequence is YGMENFGNTC…CAYVLFYQET (412 aa). C64 functions as the Nucleophile in the catalytic mechanism. 2 disordered regions span residues 115–145 and 243–266; these read EALA…KDSP and ESPQ…SRTP. Positions 249-263 are enriched in low complexity; it reads SDVSDSVIPSSSSGS. H417 functions as the Proton acceptor in the catalytic mechanism. The segment at 526–752 is disordered; the sequence is APTAPQLSTH…HDRSSHGKWR (227 aa). Residues 548–572 show a composition bias toward pro residues; it reads SPAPDPAPLTSLPPIPPIPETPPAP. The stretch at 573–620 forms a coiled coil; that stretch reads LTSRKSDLQSKKERVKEEKERKAAEKEKEKQRRKEIETRLKDRQRRED. 2 stretches are compositionally biased toward basic and acidic residues: residues 576–643 and 734–747; these read RKSD…RNHA and EQEH…DRSS.

Belongs to the peptidase C19 family. In terms of assembly, interacts with creA, creC and qutD.

It carries out the reaction Thiol-dependent hydrolysis of ester, thioester, amide, peptide and isopeptide bonds formed by the C-terminal Gly of ubiquitin (a 76-residue protein attached to proteins as an intracellular targeting signal).. In terms of biological role, ubiquitin thioesterase component of the regulatory network controlling carbon source utilization through ubiquitination and deubiquitination involving creA, creB, creC, creD and acrB. Deubiquitinates the creA catabolic repressor and the quinate permease qutD. Also plays a role in response to carbon starvation and the control of extracellular proteases activity. The protein is Ubiquitin carboxyl-terminal hydrolase creB (creB) of Emericella nidulans (strain FGSC A4 / ATCC 38163 / CBS 112.46 / NRRL 194 / M139) (Aspergillus nidulans).